A 243-amino-acid chain; its full sequence is Cell division protein ZipA (243 aa).

Residues 1 to 4 (MSDM) lie on the Periplasmic side of the membrane. A helical transmembrane segment spans residues 5–25 (AMIRIGILIAGLLLVAAIFLF). The Cytoplasmic segment spans residues 26–243 (GRPKKSPQGR…APPLTKSPRW (218 aa)). The tract at residues 30–89 (KSPQGRRVDKGEGQPRERREPVISSEFGAEGDAAERAEGVEQSELNLEGQDASGGNEVGK) is disordered. A compositionally biased stretch (basic and acidic residues) spans 35–50 (RRVDKGEGQPRERREP).

Belongs to the ZipA family. As to quaternary structure, interacts with FtsZ via their C-terminal domains.

It is found in the cell inner membrane. In terms of biological role, essential cell division protein that stabilizes the FtsZ protofilaments by cross-linking them and that serves as a cytoplasmic membrane anchor for the Z ring. Also required for the recruitment to the septal ring of downstream cell division proteins. The sequence is that of Cell division protein ZipA from Xanthomonas axonopodis pv. citri (strain 306).